The chain runs to 314 residues: MTALILKRVAQAIPVMLIVAILTFLLMKLLPGDPAILIAGDGASPETVERIRVELGLDQPTVVQLGQWLWNLFHFDLGRSFLLSQPVSQAIAERLPVTISLALLAFAITIPVGIIMGVVAAYLRDSWFDMGVMSLALLGVSVPSFWLAILAVILFSVTLGWFPSAGYVPFLDSPLGWLRSLILPASILALFQIGYLARMTRSEMLEVMDQDYIRTARSKGVSEYSVLSTHAFRNALVSVLTVSGYIFSLLIGGSVVIEQIFALPGLGRLLVQAILARDLPVVQGTMLFLGFLFVAINVLVDILYTIADPRVHYD.

Helical transmembrane passes span Ala-12 to Gly-32, Leu-101 to Ala-121, Leu-135 to Phe-155, Trp-177 to Ala-197, Val-237 to Ile-257, and Met-286 to Ile-306. The 210-residue stretch at Leu-95–Tyr-304 folds into the ABC transmembrane type-1 domain.

Belongs to the binding-protein-dependent transport system permease family. In terms of assembly, the complex is composed of two ATP-binding proteins (BRA1094), two transmembrane proteins (BRA1092 and BRA1093) and a solute-binding protein (BRA1090).

It localises to the cell inner membrane. Its function is as follows. Probably part of an ABC transporter complex that could be involved in peptide import. Probably responsible for the translocation of the substrate across the membrane. The chain is Putative peptide transport system permease protein BRA1092/BS1330_II1084 from Brucella suis biovar 1 (strain 1330).